The chain runs to 246 residues: 5-oxoprolinase subunit A (246 aa).

It belongs to the LamB/PxpA family. Forms a complex composed of PxpA, PxpB and PxpC.

It carries out the reaction 5-oxo-L-proline + ATP + 2 H2O = L-glutamate + ADP + phosphate + H(+). In terms of biological role, catalyzes the cleavage of 5-oxoproline to form L-glutamate coupled to the hydrolysis of ATP to ADP and inorganic phosphate. The sequence is that of 5-oxoprolinase subunit A from Cupriavidus necator (strain ATCC 17699 / DSM 428 / KCTC 22496 / NCIMB 10442 / H16 / Stanier 337) (Ralstonia eutropha).